We begin with the raw amino-acid sequence, 152 residues long: Succinate dehydrogenase [ubiquinone] cytochrome b small subunit A, mitochondrial (152 aa).

A mitochondrion-targeting transit peptide spans 1-21 (MVTVLRLSSLCRANRASAFKS). Residues 22 to 56 (LLIRPVPCLSQDLHTVQTSQIHTSQNHHAASKAAS) lie on the Mitochondrial matrix side of the membrane. A helical transmembrane segment spans residues 57 to 78 (LHWTSERALSVALLGLLPAAYL). The Mitochondrial intermembrane portion of the chain corresponds to 79–83 (YPGAA). The helical transmembrane segment at 84-104 (VDYSLAAALTLHGHWGLGQVV) threads the bilayer. Histidine 95 contacts heme b. The Mitochondrial matrix portion of the chain corresponds to 105 to 113 (TDYVHGDAK). Tyrosine 107 contacts a ubiquinone. Residues 114 to 135 (IKLANTSLFALSALTFAGLCYF) form a helical membrane-spanning segment. The Mitochondrial intermembrane segment spans residues 136–152 (NYHDVGICKAVAMLWSL).

Belongs to the CybS family. In terms of assembly, component of complex II composed of four subunits: the flavoprotein (FP) SDHA, iron-sulfur protein (IP) SDHB, and a cytochrome b560 composed of SDHC and SDHD.

The protein resides in the mitochondrion inner membrane. The protein operates within carbohydrate metabolism; tricarboxylic acid cycle. Functionally, membrane-anchoring subunit of succinate dehydrogenase (SDH) that is involved in complex II of the mitochondrial electron transport chain and is responsible for transferring electrons from succinate to ubiquinone (coenzyme Q). SDH also oxidizes malate to the non-canonical enol form of oxaloacetate, enol-oxaloacetate. Enol-oxaloacetate, which is a potent inhibitor of the succinate dehydrogenase activity, is further isomerized into keto-oxaloacetate. This is Succinate dehydrogenase [ubiquinone] cytochrome b small subunit A, mitochondrial (sdhd-a) from Xenopus laevis (African clawed frog).